The primary structure comprises 1270 residues: MTDDNSDDKIEDELQTFFTSDKDGNTHAYNPKSPPTQNSSASSVNWNSANPDDMVVDYETDPAVVTGENISLSLQGVEVFGHEKSSSDFISKQVLDMHKDSICQCPALVGTEKPKYLQHSCHSLEAVEGQSVEPSLPFVWKPNDNLNCAGYCDALELNQTFDMTVDKVNCTFISHHAIGKSQSFHTAGSLPPTGRRSGSTSSLSYSTWTSSHSDKTHARETTYDRESFENPQVTPSEAQDMTYTAFSDVVMQSEVFVSDIGNQCACSSGKVTSEYTDGSQQRLVGEKETQALTPVSDGMEVPNDSALQEFFCLSHDESNSEPHSQSSYRHKEMGQNLRETVSYCLIDDECPLMVPAFDKSEAQVLNPEHKVTETEDTQMVSKGKDLGTQNHTSELILSSPPGQKVGSSFGLTWDANDMVISTDKTMCMSTPVLEPTKVTFSVSPIEATEKCKKVEKGNRGLKNIPDSKEAPVNLCKPSLGKSTIKTNTPIGCKVRKTEIISYPRPNFKNVKAKVMSRAVLQPKDAALSKVTPRPQQTSASSPSSVNSRQQTVLSRTPRSDLNADKKAEILINKTHKQQFNKLITSQAVHVTTHSKNASHRVPRTTSAVKSNQEDVDKASSSNSACETGSVSALFQKIKGILPVKMESAECLEMTYVPNIDRISPEKKGEKENGTSMEKQELKQEIMNETFEYGSLFLGSASKTTTTSGRNISKPDSCGLRQIAAPKAKVGPPVSCLRRNSDNRNPSADRAVSPQRIRRVSSSGKPTSLKTAQSSWVNLPRPLPKSKASLKSPALRRTGSTPSIASTHSELSTYSNNSGNAAVIKYEEKPPKPAFQNGSSGSFYLKPLVSRAHVHLMKTPPKGPSRKNLFTALNAVEKSRQKNPRSLCIQPQTAPDALPPEKTLELTQYKTKCENQSGFILQLKQLLACGNTKFEALTVVIQHLLSEREEALKQHKTLSQELVNLRGELVTASTTCEKLEKARNELQTVYEAFVQQHQAEKTERENRLKEFYTREYEKLRDTYIEEAEKYKMQLQEQFDNLNAAHETSKLEIEASHSEKLELLKKAYEASLSEIKKGHEIEKKSLEDLLSEKQESLEKQINDLKSENDALNEKLKSEEQKRRAREKANLKNPQIMYLEQELESLKAVLEIKNEKLHQQDIKLMKMEKLVDNNTALVDKLKRFQQENEELKARMDKHMAISRQLSTEQAVLQESLEKESKVNKRLSMENEELLWKLHNGDLCSPKRSPTSSAIPLQSPRNSGSFPSPSISPR.

Residues 1–14 (MTDDNSDDKIEDEL) are compositionally biased toward acidic residues. 2 disordered regions span residues 1–50 (MTDD…NSAN) and 184–236 (FHTA…VTPS). A compositionally biased stretch (low complexity) spans 38–50 (NSSASSVNWNSAN). Residue threonine 186 is modified to Phosphothreonine. Positions 197–211 (SGSTSSLSYSTWTSS) are enriched in low complexity. The span at 212-228 (HSDKTHARETTYDRESF) shows a compositional bias: basic and acidic residues. Phosphoserine is present on residues serine 381, serine 399, and serine 443. Disordered stretches follow at residues 524-560 (DAAL…PRSD) and 592-622 (THSK…SSSN). Over residues 533-556 (RPQQTSASSPSSVNSRQQTVLSRT) the composition is skewed to polar residues. At serine 629 the chain carries Phosphoserine. 3 stretches are compositionally biased toward polar residues: residues 701-710 (SKTTTTSGRN), 759-776 (VSSS…SSWV), and 797-815 (TGST…TYSN). Positions 701–815 (SKTTTTSGRN…THSELSTYSN (115 aa)) are disordered. Residues 940–1231 (IQHLLSEREE…RLSMENEELL (292 aa)) are a coiled coil. A phosphoserine mark is found at serine 1203, serine 1224, serine 1245, serine 1255, serine 1259, serine 1261, serine 1264, and serine 1268. The disordered stretch occupies residues 1237-1270 (GDLCSPKRSPTSSAIPLQSPRNSGSFPSPSISPR). Positions 1244 to 1270 (RSPTSSAIPLQSPRNSGSFPSPSISPR) are enriched in polar residues.

It belongs to the MTUS1 family. Homodimer. Interacts with AGTR2. Interacts with PTPN6. Isoform 1 associates with microtubules. Ubiquitously expressed (at protein level). Highly expressed in brain. Down-regulated in ovarian carcinoma, pancreas carcinoma, colon carcinoma and head and neck squamous cell carcinoma (HNSCC). Isoform 1 is the major isoform in most peripheral tissues. Isoform 2 is abundant in most peripheral tissues. Isoform 3 is the major isoform in brain, female reproductive tissues, thyroid and heart. Within brain it is highly expressed in corpus callosum and pons. Isoform 6 is brain-specific, it is the major isoform in cerebellum and fetal brain.

The protein localises to the mitochondrion. It localises to the golgi apparatus. The protein resides in the cell membrane. Its subcellular location is the nucleus. It is found in the cytoplasm. The protein localises to the cytoskeleton. It localises to the microtubule organizing center. The protein resides in the centrosome. Its subcellular location is the spindle. Its function is as follows. Cooperates with AGTR2 to inhibit ERK2 activation and cell proliferation. May be required for AGTR2 cell surface expression. Together with PTPN6, induces UBE2V2 expression upon angiotensin-II stimulation. Isoform 1 inhibits breast cancer cell proliferation, delays the progression of mitosis by prolonging metaphase and reduces tumor growth. The sequence is that of Microtubule-associated tumor suppressor 1 (MTUS1) from Homo sapiens (Human).